The chain runs to 557 residues: Formate--tetrahydrofolate ligase (557 aa).

Residue 66–73 (TPAGEGKS) coordinates ATP.

The protein belongs to the formate--tetrahydrofolate ligase family.

The enzyme catalyses (6S)-5,6,7,8-tetrahydrofolate + formate + ATP = (6R)-10-formyltetrahydrofolate + ADP + phosphate. Its pathway is one-carbon metabolism; tetrahydrofolate interconversion. This Clostridium botulinum (strain 657 / Type Ba4) protein is Formate--tetrahydrofolate ligase.